Here is a 104-residue protein sequence, read N- to C-terminus: Large ribosomal subunit protein cL38 (104 aa).

A chloroplast-targeting transit peptide spans 1–39 (MASVSSIFGCGVSMAPNSSLRNKAIRTERRSACGGLLIE). The segment at 42 to 76 (SRPQKKSTAHHMKTRPRKSRLSDRNRKPTVYAPLP) is disordered. Basic residues predominate over residues 44–60 (PQKKSTAHHMKTRPRKS).

Belongs to the chloroplast-specific ribosomal protein cL38 family. As to quaternary structure, part of the 50S ribosomal subunit.

The protein resides in the plastid. Its subcellular location is the chloroplast. This Pisum sativum (Garden pea) protein is Large ribosomal subunit protein cL38 (PSRP6).